Consider the following 743-residue polypeptide: F-box protein COS111 (743 aa).

The F-box domain maps to 145–191 (ELHIKNLPVEILDYIFYLVDDNLDYKSCMYTCKLFYFLAKPYYYENL). 2 disordered regions span residues 224–257 (IKPGYDEDEQEEGQEENAENGEEENGGGARDPQY) and 311–330 (FSNVSSKSSRSTSSKSSSST). Positions 229–248 (DEDEQEEGQEENAENGEEEN) are enriched in acidic residues.

Its function is as follows. F-box protein probably involved in ubiquitin conjugation pathway. This Candida albicans (strain SC5314 / ATCC MYA-2876) (Yeast) protein is F-box protein COS111 (COS111).